The chain runs to 207 residues: LexA repressor (207 aa).

A DNA-binding region (H-T-H motif) is located at residues 28–48 (RAEISRELGFKSANAAEEHLK). Catalysis depends on for autocatalytic cleavage activity residues Ser123 and Lys160.

Belongs to the peptidase S24 family. Homodimer.

It carries out the reaction Hydrolysis of Ala-|-Gly bond in repressor LexA.. Represses a number of genes involved in the response to DNA damage (SOS response), including recA and lexA. In the presence of single-stranded DNA, RecA interacts with LexA causing an autocatalytic cleavage which disrupts the DNA-binding part of LexA, leading to derepression of the SOS regulon and eventually DNA repair. This Haemophilus influenzae (strain ATCC 51907 / DSM 11121 / KW20 / Rd) protein is LexA repressor.